The sequence spans 330 residues: Putative quinone oxidoreductase YhfP (330 aa).

NADP(+) contacts are provided by residues tyrosine 45, 160–163 (TGGV), 182–184 (TGN), arginine 202, leucine 248, isoleucine 262, serine 273, and asparagine 320.

This sequence belongs to the zinc-containing alcohol dehydrogenase family. Quinone oxidoreductase subfamily. Homodimer, or homotetramer.

It localises to the cytoplasm. The protein is Putative quinone oxidoreductase YhfP (yhfP) of Bacillus subtilis (strain 168).